A 1046-amino-acid polypeptide reads, in one-letter code: Hemoglobin-haptoglobin-binding protein A (1046 aa).

An N-terminal signal peptide occupies residues 1–24; that stretch reads MTNFRLNLLAYSVMLGLTAGVAYA. Repeat copies occupy residues 26–29, 30–33, 34–37, and 38–41. The interval 26–41 is 4 X 4 AA tandem repeats of Q-P-T-N; sequence QPTNQPTNQPTNQPTN. The short motif at 51–58 is the TonB box element; sequence EQINVLGS. The TBDR plug domain occupies 61–188; it reads HNDNTPPKIA…LGGSVSFDTK (128 aa). The TBDR beta-barrel domain occupies 196 to 1046; it reads NKNYYASYKR…NYRMSVQFEF (851 aa). A TonB C-terminal box motif is present at residues 1029–1046; sequence NRFYAPGRNYRMSVQFEF.

Belongs to the TonB-dependent receptor family. Hemoglobin/haptoglobin binding protein subfamily.

It localises to the cell outer membrane. Functionally, acts as a receptor for the hemoglobin/haptoglobin complex of the human host and is required for heme uptake. Does not bind hemoglobin alone. This is Hemoglobin-haptoglobin-binding protein A (hhuA) from Haemophilus influenzae.